The primary structure comprises 336 residues: tRNA N6-adenosine threonylcarbamoyltransferase (336 aa).

The Fe cation site is built by His108 and His112. Residues 129–133 (LISGG), Asp161, Glu178, and Ser258 contribute to the substrate site. Residue Asp286 participates in Fe cation binding.

This sequence belongs to the KAE1 / TsaD family. Fe(2+) serves as cofactor.

The protein localises to the cytoplasm. It carries out the reaction L-threonylcarbamoyladenylate + adenosine(37) in tRNA = N(6)-L-threonylcarbamoyladenosine(37) in tRNA + AMP + H(+). Functionally, required for the formation of a threonylcarbamoyl group on adenosine at position 37 (t(6)A37) in tRNAs that read codons beginning with adenine. Is probably involved in the transfer of the threonylcarbamoyl moiety of threonylcarbamoyl-AMP (TC-AMP) to the N6 group of A37. This chain is tRNA N6-adenosine threonylcarbamoyltransferase, found in Pyrobaculum neutrophilum (strain DSM 2338 / JCM 9278 / NBRC 100436 / V24Sta) (Thermoproteus neutrophilus).